The sequence spans 526 residues: Dolichyl pyrophosphate Glc1Man9GlcNAc2 alpha-1,3-glucosyltransferase (526 aa).

11 consecutive transmembrane segments (helical) span residues 4 to 24, 103 to 122, 143 to 163, 188 to 208, 238 to 258, 334 to 354, 368 to 388, 389 to 409, 427 to 449, 461 to 481, and 488 to 508; these read FGIA…VTLL, LLFQ…YAVH, FILS…HIHF, GAFL…VAPA, LISL…PFLA, PLAT…CLWC, LCAL…ILLA, VLPM…FLIL, LPIK…KTLF, TFYL…FPFT, and PFIP…YAWL.

It belongs to the ALG6/ALG8 glucosyltransferase family.

It localises to the endoplasmic reticulum membrane. It catalyses the reaction an alpha-D-Glc-(1-&gt;3)-alpha-D-Man-(1-&gt;2)-alpha-D-Man-(1-&gt;2)-alpha-D-Man-(1-&gt;3)-[alpha-D-Man-(1-&gt;2)-alpha-D-Man-(1-&gt;3)-[alpha-D-Man-(1-&gt;2)-alpha-D-Man-(1-&gt;6)]-alpha-D-Man-(1-&gt;6)]-beta-D-Man-(1-&gt;4)-beta-D-GlcNAc-(1-&gt;4)-alpha-D-GlcNAc-diphospho-di-trans,poly-cis-dolichol + a di-trans,poly-cis-dolichyl beta-D-glucosyl phosphate = an alpha-D-Glc-(1-&gt;3)-alpha-D-Glc-(1-&gt;3)-alpha-D-Man-(1-&gt;2)-alpha-D-Man-(1-&gt;2)-alpha-D-Man-(1-&gt;3)-[alpha-D-Man-(1-&gt;2)-alpha-D-Man-(1-&gt;3)-[alpha-D-Man-(1-&gt;2)-alpha-D-Man-(1-&gt;6)]-alpha-D-Man-(1-&gt;6)]-beta-D-Man-(1-&gt;4)-beta-D-GlcNAc-(1-&gt;4)-alpha-D-GlcNAc-diphospho-di-trans,poly-cis-dolichol + a di-trans,poly-cis-dolichyl phosphate + H(+). It participates in protein modification; protein glycosylation. Functionally, dolichyl pyrophosphate Glc1Man9GlcNAc2 alpha-1,3-glucosyltransferase that operates in the biosynthetic pathway of dolichol-linked oligosaccharides, the glycan precursors employed in protein asparagine (N)-glycosylation. The assembly of dolichol-linked oligosaccharides begins on the cytosolic side of the endoplasmic reticulum membrane and finishes in its lumen. The sequential addition of sugars to dolichol pyrophosphate produces dolichol-linked oligosaccharides containing fourteen sugars, including two GlcNAcs, nine mannoses and three glucoses. Once assembled, the oligosaccharide is transferred from the lipid to nascent proteins by oligosaccharyltransferases. In the lumen of the endoplasmic reticulum, adds the second glucose residue from dolichyl phosphate glucose (Dol-P-Glc) onto the lipid-linked oligosaccharide intermediate Glc(1)Man(9)GlcNAc(2)-PP-Dol to produce Glc(2)Man(9)GlcNAc(2)-PP-Dol. Glc(2)Man(9)GlcNAc(2)-PP-Dol is a substrate for ALG10, the following enzyme in the biosynthetic pathway. Required for PKD1/Polycystin-1 maturation and localization to the plasma membrane of the primary cilia. This Bos taurus (Bovine) protein is Dolichyl pyrophosphate Glc1Man9GlcNAc2 alpha-1,3-glucosyltransferase.